The sequence spans 250 residues: Aquaporin TIP2-3 (250 aa).

An N-acetylmethionine modification is found at Met-1. Over 1–24 (MVKIEVGSVGDSFSVSSLKAYLSE) the chain is Cytoplasmic. N6,N6-dimethyllysine is present on Lys-3. Residues 25–45 (FIATLLFVFAGVGSAVAFAKL) traverse the membrane as a helical segment. The Vacuolar portion of the chain corresponds to 46–54 (TSDGALDPA). A helical transmembrane segment spans residues 55–75 (GLVAIAIAHAFALFVGVSIAA). Residues 76–101 (NISGGHLNPAVTLGLAIGGNITLITG) lie on the Cytoplasmic side of the membrane. The NPA 1 signature appears at 83 to 85 (NPA). Residues 102 to 122 (FFYWIAQCLGSIVACLLLVFV) form a helical membrane-spanning segment. The Vacuolar segment spans residues 123-134 (TNGKSVPTHGVS). A helical transmembrane segment spans residues 135 to 155 (AGLGAVEGVVMEIVVTFALVY). Residues 156–168 (TVYATAADPKKGS) are Cytoplasmic-facing. Residues 169-189 (LGTIAPIAIGFIVGANILAAG) form a helical membrane-spanning segment. The Vacuolar segment spans residues 190-217 (PFSGGSMNPARSFGPAVVSGDLSQIWIY). The NPA 2 signature appears at 197–199 (NPA). The helical transmembrane segment at 218-238 (WVGPLVGGALAGLIYGDVFIG) threads the bilayer. Over 239-250 (SYEAVETREIRV) the chain is Cytoplasmic.

This sequence belongs to the MIP/aquaporin (TC 1.A.8) family. TIP (TC 1.A.8.10) subfamily. In terms of assembly, interacts with cucumber mosaic virus (CMV) Protein 1a. Widely expressed.

It localises to the vacuole membrane. Transports methylammonium or ammonium in yeast cells, preferentially at high medium pH. May participate in vacuolar compartmentation and detoxification of ammonium. This is Aquaporin TIP2-3 (TIP2-3) from Arabidopsis thaliana (Mouse-ear cress).